The primary structure comprises 2442 residues: MAENLLDGPPNPKRAKLSSPGFSANDSTDFGSLFDLENDLPDELIPNGELSLLNSGNLVPDAASKHKQLSELLRGGSGSSITPGIGNVSASSPVQQGLGGQAQGQPNSTSMASLGAMGKSPLNPGDSSTPSLPKQAASTSGPTPPASQALNPQAQKQVGLVTSSPATSQTGPGICMNANFNQTHPGLLNSNSGHSLMNQAQQGQAQVMNGSLGAAGRGRGAGMPYPAPAMQGATSSVLAETLTQVSPQMAGHAGLNTAQAGGMTKMGMTGNTSPFGQPFSQTGGQPMGATGVNPQLASKQSMVNSLPAFPTDIKNTSVTTVPNMSQLQTSVGIVPAQGIATGPTADPEKRKLIQQQLVLLLHAHKCQRREQANGEVRACSLPHCRTMKNVLNHMTHCQAGKACQVAHCASSRQIISHWKNCTRHDCPVCLPLKNASDKRNQQTILGSPASGIQNTIGSVGAGQQNATSLSNPNPIDPSSMQRAYAALGLPYMNQPQTQLQPQVPGQQPAQPPAHQQMRTLNALGNNPMSIPAGGITTDQQPPNLISESALPTSLGATNPLMNDGSNSDSIGSLSTIPTAAPPSSTGVRKGWHEHVTQDLRSHLVHKLVQAIFPTPDPAALKDRRMENLVAYAKKVEGDMYESANSRDEYYHLLAEKIYKIQKELEEKRRSRLHKQGILGNQPALPAPGAQPPVIPPTQSVRPPNGPLSLPVNRVQVSQGMNSFNPMSLGNVQLPQAPMGPRAASPMNHSVQMNSMASVPGMAISPSRMPQPPNMMGTHANNIMAQAPTQNQFLPQNQFPSSSGAMSVNSVGMGQPATQAGVSQGQVPGGTLPNPLNMLAPQTSQLPCPPVTQSPLHPTPPPASTAAGMPSLQHPTPPGMTPPQPAAPTQPSTPVSSGQTPTPTPGSVPSAAQTQSTPTVQAAAQAQVTPQPQTPVQPPSVATPQSSQQQPTPVHTQPPGTPLSQAAASIDNRVPTPSSVTSAETSSQQPGPDVPMLEMKTEVQTDDAEPDPAESKGEPRSEMMEEDLQGSSQVKEETDTTEQKSEPMEVEEKKPEVKVEAKEEEENSANGTASQSTSPSQPRKKIFKPEELRQALMPTLEALYRQDPESLPFRQPVDPQLLGIPDYFDIVKNPMDLSTIKRKLDTGQYQEPWQYVDDVWLMFNNAWLYNRKTSRVYKFCSKLAEVFEQEIDPVMQSLGYCCGRKYEFSPQTLCCYGKQLCTIPRDAAYYSYQNRYHFCEKCFTEIQGENVTLGDDPSQPQTTISKDQFEKKKNDTLDPEPFVDCKECGRKMHQICVLHYDIIWPSGFVCDNCLKKTGRPRKENKFSAKRLQTTRLGNHLEDRVNKFLRRQNHPEAGEVFVRVVASSDKTVEVKPGMKSRFVDSGEMSESFPYRTKALFAFEEIDGVDVCFFGMHVQEYGSDCPPPNTRRVYISYLDSIHFFRPRCLRTAVYHEILIGYLEYVKKLGYVTGHIWACPPSEGDDYIFHCHPPDQKIPKPKRLQEWYKKMLDKAFAERIINDYKDIFKQANEDRLTSAKELPYFEGDFWPNVLEESIKELEQEEEERKKEESTAASETPEGSQGDSKNAKKKNNKKTNKNKSSISRANKKKPSMPNVSNDLSQKLYATMEKHKEVFFVIHLHAGPVISTQPPIVDPDPLLSCDLMDGRDAFLTLARDKHWEFSSLRRSKWSTLCMLVELHTQGQDRFVYTCNECKHHVETRWHCTVCEDYDLCINCYNTKSHTHKMVKWGLGLDDEGSSQGEPQSKSPQESRRLSIQRCIQSLVHACQCRNANCSLPSCQKMKRVVQHTKGCKRKTNGGCPVCKQLIALCCYHAKHCQENKCPVPFCLNIKHKLRQQQIQHRLQQAQLMRRRMATMNTRNVPQQSLPSPTSAPPGTPTQQPSTPQTPQPPAQPQPSPVNMSPAGFPSVARTQPPTIVSAGKPTNQVPAPPPPAQPPPAAVEAARQIEREGQQQQHLYRANINNGMPPGRAGMGTPGSQMAPVGLNVPRPNQVSGPVMSSMPPGQWQQAPIPQQQPMPGMPRPVMSMQAQAAVAGPRMPNVQPPRSISPSALQDLLRTLKSPSSPQQQQQVLNILKSNPQLMAAFIKQRTAKYVANQPGMQPQPGLQSQPGMQPQPGMHQQPSLQNLNAMQAGVPRPGVPPPQQAMGGLNPQGQALNIMNPGHNPNMANMNPQYREMVRRQLLQHQQQQQQQQQQQQQQQQSSASLAGGMAGHSQFQQPQGPGGYAPAMQQQRMQQHLPIQGSSMGQMAAPMGQLGQMGQPGLGADSTPNIQQALQQRILQQQQMKQQIGSPGQPNPMSPQQHMLSGQPQASHLPGQQIATSLSNQVRSPAPVQSPRPQSQPPHSSPSPRIQPQPSPHHVSPQTGSPHPGLAVTMASSMDQGHLGNPEQSAMLPQLNTPNRSALSSELSLVGDTTGDTLEKFVEGL.

Disordered stretches follow at residues 1 to 40 (MAEN…ENDL) and 74 to 168 (RGGS…PATS). Alanine 2 carries the N-acetylalanine modification. A compositionally biased stretch (polar residues) spans 20 to 30 (PGFSANDSTDF). Serine 120 carries the post-translational modification Phosphoserine. Residues 125-168 (GDSSTPSLPKQAASTSGPTPPASQALNPQAQKQVGLVTSSPATS) are compositionally biased toward polar residues. An Omega-N-methylarginine modification is found at arginine 219. Positions 226–409 (PAPAMQGATS…GKACQVAHCA (184 aa)) are interaction with SRCAP. A compositionally biased stretch (low complexity) spans 261–272 (GGMTKMGMTGNT). The disordered stretch occupies residues 261 to 290 (GGMTKMGMTGNTSPFGQPFSQTGGQPMGAT). Residues 273–284 (SPFGQPFSQTGG) are compositionally biased toward polar residues. The TAZ-type 1 zinc-finger motif lies at 346 to 432 (DPEKRKLIQQ…RHDCPVCLPL (87 aa)). Histidine 362, cysteine 366, cysteine 379, cysteine 384, histidine 393, cysteine 397, cysteine 403, cysteine 408, histidine 417, cysteine 421, cysteine 426, and cysteine 429 together coordinate Zn(2+). In terms of domain architecture, KIX spans 586–665 (GVRKGWHEHV…KIYKIQKELE (80 aa)). 2 positions are modified to asymmetric dimethylarginine: arginine 600 and arginine 624. At lysine 656 the chain carries N6-acetyllysine. The segment covering 792–825 (FLPQNQFPSSSGAMSVNSVGMGQPATQAGVSQGQ) has biased composition (polar residues). A disordered region spans residues 792–1084 (FLPQNQFPSS…STSPSQPRKK (293 aa)). 2 stretches are compositionally biased toward pro residues: residues 846-862 (PCPP…PPPA) and 874-887 (PTPP…PAAP). The span at 894–906 (VSSGQTPTPTPGS) shows a compositional bias: polar residues. Composition is skewed to low complexity over residues 909 to 930 (SAAQ…VTPQ) and 938 to 957 (PSVA…HTQP). The span at 974–989 (PTPSSVTSAETSSQQP) shows a compositional bias: polar residues. A Glycyl lysine isopeptide (Lys-Gly) (interchain with G-Cter in SUMO1) cross-link involves residue lysine 999. Over residues 1012 to 1022 (AESKGEPRSEM) the composition is skewed to basic and acidic residues. Position 1015 is an N6-acetyllysine (lysine 1015). Serine 1031 is modified (phosphoserine). Residues 1033-1060 (VKEETDTTEQKSEPMEVEEKKPEVKVEA) are compositionally biased toward basic and acidic residues. Residues lysine 1034 and lysine 1057 each participate in a glycyl lysine isopeptide (Lys-Gly) (interchain with G-Cter in SUMO1) cross-link. Residues 1067 to 1080 (SANGTASQSTSPSQ) show a composition bias toward polar residues. Residue serine 1077 is modified to Phosphoserine. A Bromo domain is found at 1086-1193 (FKPEELRQAL…EVFEQEIDPV (108 aa)). An interaction with histone region spans residues 1125–1171 (DYFDIVKNPMDLSTIKRKLDTGQYQEPWQYVDDVWLMFNNAWLYNRK). The interaction with ASF1A stretch occupies residues 1163–1181 (NNAWLYNRKTSRVYKFCSK). Lysine 1217 carries the N6-acetyllysine modification. One can recognise a CBP/p300-type HAT domain in the interval 1324 to 1701 (KFSAKRLQTT…MLVELHTQGQ (378 aa)). Serine 1383 and serine 1387 each carry phosphoserine; by IKKA. The interval 1434 to 1436 (YLD) is interaction with histone. Residues 1435–1437 (LDS), 1447–1448 (RT), isoleucine 1494, arginine 1499, and tryptophan 1503 each bind acetyl-CoA. Residues 1548 to 1575 (NVLEESIKELEQEEEERKKEESTAASET) are a coiled coil. The segment covering 1557–1569 (LEQEEEERKKEES) has biased composition (basic and acidic residues). A disordered region spans residues 1557 to 1616 (LEQEEEERKKEESTAASETPEGSQGDSKNAKKKNNKKTNKNKSSISRANKKKPSMPNVSN). An N6-acetyllysine mark is found at lysine 1584, lysine 1592, lysine 1593, lysine 1596, and lysine 1598. Basic residues predominate over residues 1586-1596 (AKKKNNKKTNK). Residues 1703–1751 (RFVYTCNECKHHVETRWHCTVCEDYDLCINCYNTKSHTHKMVKWGLGLD) form a ZZ-type zinc finger. Zn(2+) is bound by residues cysteine 1708, cysteine 1711, cysteine 1721, cysteine 1724, cysteine 1730, cysteine 1733, histidine 1739, and histidine 1741. 2 positions are modified to N6-acetyllysine: lysine 1742 and lysine 1745. Phosphoserine is present on serine 1764. Residues 1766-1847 (QESRRLSIQR…KCPVPFCLNI (82 aa)) form a TAZ-type 2 zinc finger. The disordered stretch occupies residues 1875–1960 (TRNVPQQSLP…QPPPAAVEAA (86 aa)). Pro residues-rich tracts occupy residues 1901-1913 (PQTP…PQPS) and 1944-1955 (PAPPPPAQPPPA). Residues serine 2064, serine 2077, and serine 2080 each carry the phosphoserine modification. Residues 2112-2421 (NQPGMQPQPG…LNTPNRSALS (310 aa)) are disordered. Composition is skewed to low complexity over residues 2113-2138 (QPGM…HQQP), 2197-2217 (QLLQ…QQQQ), 2261-2280 (MGQM…PGLG), and 2287-2305 (IQQA…KQQI). Composition is skewed to polar residues over residues 2315 to 2327 (SPQQ…QPQA) and 2334 to 2343 (QIATSLSNQV). Over residues 2349 to 2372 (VQSPRPQSQPPHSSPSPRIQPQPS) the composition is skewed to pro residues. Phosphoserine is present on serine 2351. Residues 2411–2421 (QLNTPNRSALS) show a composition bias toward polar residues.

As to quaternary structure, part of a complex composed of MSX3, CREBBP/CBP AND EP300/p300; the interaction with MSX3 decreases histone acetylation activity. Found in a complex containing NCOA2; NCOA3; IKKA; IKKB and IKBKG. Probably part of a complex with HIF1A and EP300. Interacts with phosphorylated CREB1. Interacts with the C-terminal region of CITED4. The TAZ-type 1 domain interacts with HIF1A. Interacts with SRCAP, CARM1, ELF3, MLLT7/FOXO4, N4BP2, NCOA1, NCOA3, NCOA6, PCAF, DDX5, DDX17, PELP1, PML, SMAD1, SMAD2, SMAD3, SPIB, TRERF1 and ZCCHC12. Interacts with KLF1; the interaction results in acetylation and enhancement of transcriptional activity of KLF1. Interacts with DAXX; the interaction is dependent on CBP sumoylation and results in suppression of the transcriptional activity via recruitment of HDAC2 to DAXX. Interacts with MAF. Interacts with MTDH. Interacts with MAFG; the interaction acetylates MAFG in the basic region and stimulates NFE2 transcriptional activity through increasing its DNA-binding activity. Interacts with IRF2; the interaction acetylates IRF2 and regulates its activity on the H4 promoter. Interacts (via N-terminus) with SS18L1/CREST (via C-terminus). Interacts with IRF3 (when phosphorylated); forming the dsRNA-activated factor 1 (DRAF1), a complex which activates the transcription of the type I interferon genes. Interacts with MECOM. Interacts with CITED1 (via C-terminus) Interacts with GATA1; the interaction results in acetylation and enhancement of transcriptional activity of GATA1. Interacts with FOXO1; the interaction acetylates FOXO1 and inhibits its transcriptional activity. Interacts with NPAS2, CLOCK and BMAL1. Interacts with ASF1A and ASF1B; this promotes histone acetylation. Interacts with acetylated TP53/p53 and with the acetylated histones H3 and H4. Interacts (via transactivation domain and C-terminus) with PCNA; the interaction occurs on chromatin in UV-irradiated damaged cells. Interacts with DHX9 (via N-terminus); this interaction mediates association with RNA polymerase II holoenzyme and stimulates CREB-dependent transcriptional activation. Interacts with SMAD4; negatively regulated by ZBTB7A. Forms a complex with KMT2A and CREB1. Interacts with DDX3X; this interaction may facilitate HNF4A acetylation. Interacts with MSX1; the interaction may inhibit MSX1 autoinactivation. Interacts with MSX3. Interacts with ACSS2. Post-translationally, methylation of the KIX domain by CARM1 blocks association with CREB. This results in the blockade of CREB signaling, and in activation of apoptotic response. In terms of processing, phosphorylated by CHUK/IKKA at Ser-1383 and Ser-1387; these phosphorylations promote cell growth by switching the binding preference of CREBBP from TP53 to NF-kappa-B. Sumoylation negatively regulates transcriptional activity via the recruitment of DAAX. Post-translationally, autoacetylation is required for binding to protein substrates, such as acetylated histones and acetylated TP53/p53. Autoacetylation is induced by glucose and fatty acids. As to expression, expressed in hypothalamus and cortex.

It is found in the cytoplasm. The protein resides in the nucleus. The catalysed reaction is L-lysyl-[histone] + acetyl-CoA = N(6)-acetyl-L-lysyl-[histone] + CoA + H(+). It catalyses the reaction L-lysyl-[protein] + acetyl-CoA = N(6)-acetyl-L-lysyl-[protein] + CoA + H(+). The enzyme catalyses (S)-lactoyl-CoA + L-lysyl-[protein] = N(6)-[(S)-lactoyl]-L-lysyl-[protein] + CoA + H(+). Acetylates histones, giving a specific tag for transcriptional activation. Mediates acetylation of histone H3 at 'Lys-18' and 'Lys-27' (H3K18ac and H3K27ac, respectively). Also acetylates non-histone proteins, like DDX21, FBL, IRF2, MAFG, NCOA3, POLR1E/PAF53 and FOXO1. Binds specifically to phosphorylated CREB and enhances its transcriptional activity toward cAMP-responsive genes. Acts as a coactivator of ALX1. Acts as a circadian transcriptional coactivator which enhances the activity of the circadian transcriptional activators: NPAS2-BMAL1 and CLOCK-BMAL1 heterodimers. Acetylates PCNA; acetylation promotes removal of chromatin-bound PCNA and its degradation during nucleotide excision repair (NER). Acetylates POLR1E/PAF53, leading to decreased association of RNA polymerase I with the rDNA promoter region and coding region. Acetylates DDX21, thereby inhibiting DDX21 helicase activity. Acetylates FBL, preventing methylation of 'Gln-105' of histone H2A (H2AQ104me). In addition to protein acetyltransferase, can use different acyl-CoA substrates, such as lactoyl-CoA, and is able to mediate protein lactylation. Catalyzes lactylation of MRE11 in response to DNA damage, thereby promoting DNA double-strand breaks (DSBs) via homologous recombination (HR). Functions as a transcriptional coactivator for SMAD4 in the TGF-beta signaling pathway. The polypeptide is Histone lysine acetyltransferase CREBBP (Crebbp) (Rattus norvegicus (Rat)).